Reading from the N-terminus, the 570-residue chain is MNVEEIAFKYALANAVKYGGKADVKAVMAKLMAEVPELRARAREVKQIVDAVVARVNSMPLEEQRRILRERWPELLEERRAEQRRPGLEGLPELPNVRGGVVVRFAPNPDFVLHLGSARPAILNYAYRIKYGGKFILRFEDTDPRIKSPLVTEEVNAYESIREDLRWLGVRWDEEYIQSQRMEIYYEHAKKLLEMGAAYVDLCKPEEWRRLRNEKKACPHREQPPEVNLELWDKMLEGRFKEGEAVLRIKTDLTHPDPSVRDWVAFRIIDTSKTPHPLTGDKYIVWPTYNFAVSIDDHLMGVTHVLRAQEHSVNTIKQSYVFRHFGWEQPVTIHFGRLRIEGATLSKSKLKAMRIKYDDLTLPTLAGLRNRGIVPEAIWDLILSVGIKPSDSTVALANLFAFNRKHIEPIADRYMYVADPVKLVFEADKELTAHVPFHPSFKERGERTYRLGPGRVEVYIQRRDAVAGKVVRLMELANVEIVRVEGDVAYGRIHSYSLDEAKKIGAPIIQWVWDPVEITVIKPAGVGRKEVEVGLGEGWLERVEVGKYVQFFRYGYLKKRGPREFVFLHD.

Positions 107–117 match the 'HIGH' region motif; sequence PNPDFVLHLGS.

This sequence belongs to the class-I aminoacyl-tRNA synthetase family. Glutamate--tRNA ligase type 2 subfamily.

Its subcellular location is the cytoplasm. The enzyme catalyses tRNA(Glu) + L-glutamate + ATP = L-glutamyl-tRNA(Glu) + AMP + diphosphate. Its function is as follows. Catalyzes the attachment of glutamate to tRNA(Glu) in a two-step reaction: glutamate is first activated by ATP to form Glu-AMP and then transferred to the acceptor end of tRNA(Glu). This chain is Glutamate--tRNA ligase, found in Pyrobaculum aerophilum (strain ATCC 51768 / DSM 7523 / JCM 9630 / CIP 104966 / NBRC 100827 / IM2).